The following is a 213-amino-acid chain: Adenylate kinase (213 aa).

ATP is bound at residue 10-15 (GAGKGT). Positions 30–59 (STGDIFRANIKNNTELGQKAKTYMDKGELV) are NMP. AMP is bound by residues Thr-31, Arg-36, 57 to 59 (ELV), 85 to 88 (GFPR), and Gln-92. Residues 126 to 163 (GRRACVGCGATYHIQFNPTKVEGICDACGEKLILRDDD) are LID. Arg-127 is an ATP binding site. Zn(2+)-binding residues include Cys-130 and Cys-133. Position 136-137 (136-137 (TY)) interacts with ATP. Residues Cys-150 and Cys-153 each coordinate Zn(2+). The AMP site is built by Arg-160 and Arg-171. An ATP-binding site is contributed by Gln-199.

This sequence belongs to the adenylate kinase family. In terms of assembly, monomer.

The protein localises to the cytoplasm. The catalysed reaction is AMP + ATP = 2 ADP. It functions in the pathway purine metabolism; AMP biosynthesis via salvage pathway; AMP from ADP: step 1/1. Catalyzes the reversible transfer of the terminal phosphate group between ATP and AMP. Plays an important role in cellular energy homeostasis and in adenine nucleotide metabolism. The protein is Adenylate kinase of Lachnospira eligens (strain ATCC 27750 / DSM 3376 / VPI C15-48 / C15-B4) (Eubacterium eligens).